Consider the following 437-residue polypeptide: Glutamate-1-semialdehyde 2,1-aminomutase (437 aa).

N6-(pyridoxal phosphate)lysine is present on Lys-274.

This sequence belongs to the class-III pyridoxal-phosphate-dependent aminotransferase family. HemL subfamily. In terms of assembly, homodimer. The cofactor is pyridoxal 5'-phosphate.

Its subcellular location is the cytoplasm. It carries out the reaction (S)-4-amino-5-oxopentanoate = 5-aminolevulinate. Its pathway is porphyrin-containing compound metabolism; protoporphyrin-IX biosynthesis; 5-aminolevulinate from L-glutamyl-tRNA(Glu): step 2/2. The polypeptide is Glutamate-1-semialdehyde 2,1-aminomutase (Paracidovorax citrulli (strain AAC00-1) (Acidovorax citrulli)).